A 272-amino-acid chain; its full sequence is Phosphate import ATP-binding protein PstB (272 aa).

One can recognise an ABC transporter domain in the interval 26-267 (IVVKNWNLYY…PQVKRTEDYI (242 aa)). Residue 58–65 (GPSGCGKS) participates in ATP binding.

It belongs to the ABC transporter superfamily. Phosphate importer (TC 3.A.1.7) family. As to quaternary structure, the complex is composed of two ATP-binding proteins (PstB), two transmembrane proteins (PstC and PstA) and a solute-binding protein (PstS).

It is found in the cell inner membrane. The enzyme catalyses phosphate(out) + ATP + H2O = ADP + 2 phosphate(in) + H(+). In terms of biological role, part of the ABC transporter complex PstSACB involved in phosphate import. Responsible for energy coupling to the transport system. This is Phosphate import ATP-binding protein PstB from Hydrogenovibrio crunogenus (strain DSM 25203 / XCL-2) (Thiomicrospira crunogena).